A 503-amino-acid polypeptide reads, in one-letter code: MLARSRFILVLVVGALLAVLSFSLQYLHLIPTNPVAEQRSAGRSRKRVNPVLHTDPPAPDPIRDTHQYCNYPNLTEHGWEGHCPPDYKLLSVQVMIRHGDRFPLYSIPKTKKPTIDCILSEKRKPSHPLLASFISHMALGGRGHWDASLGSLPRLPSHSTCEMGELTQTGVVRQLKNGDHLRQAYISRHNLLAADWLPRQLWAETTGKSRTLQSGLAFLFGFLPHFDWSRLTVRQQWSTLFCGQSCDCPARNRYLDQEQRRQYRQRIADAELERTYVTMAKTLGVATKTLRAANPVDALLCHFCHGLPFPCSSTQTSSNAPDEGACLTLEHFAVIRRQQKDDELERREAGLYRRYAVLAAHPYLNRSAARLERIARGSQMRKSKEDAVFALASAHDVTMAPLLSALGLEGAGFPKFAARLVFELWSSPETKERRSDRKLDNMFIRVLYNGEDLTFDTAFCREHNRRSTQPLCPLGNFLSFVRKDMFSVVNATSYQQACHQTVL.

At 1 to 6 (MLARSR) the chain is on the cytoplasmic side. A helical; Signal-anchor for type II membrane protein membrane pass occupies residues 7–27 (FILVLVVGALLAVLSFSLQYL). The Lumenal segment spans residues 28 to 503 (HLIPTNPVAE…YQQACHQTVL (476 aa)). Positions 38-63 (QRSAGRSRKRVNPVLHTDPPAPDPIR) are disordered. An N-linked (GlcNAc...) asparagine glycan is attached at Asn73. His98 functions as the Nucleophile in the catalytic mechanism. N-linked (GlcNAc...) asparagine glycosylation is present at Asn365. Asp396 functions as the Proton donor in the catalytic mechanism. The N-linked (GlcNAc...) asparagine glycan is linked to Asn490.

The protein belongs to the histidine acid phosphatase family.

Its subcellular location is the golgi apparatus membrane. The catalysed reaction is 3-O-[beta-D-GlcA-(1-&gt;3)-beta-D-Gal-(1-&gt;3)-beta-D-Gal-(1-&gt;4)-beta-D-2-O-P-Xyl]-L-seryl-[protein] + H2O = 3-O-(beta-D-GlcA-(1-&gt;3)-beta-D-Gal-(1-&gt;3)-beta-D-Gal-(1-&gt;4)-beta-D-Xyl)-L-seryl-[protein] + phosphate. Functionally, responsible for the 2-O-dephosphorylation of xylose in the glycosaminoglycan-protein linkage region of proteoglycans thereby regulating the amount of mature glycosaminoglycan (GAG) chains. Sulfated glycosaminoglycans (GAGs), including heparan sulfate and chondroitin sulfate, are synthesized on the so-called common GAG-protein linkage region (GlcUAbeta1-3Galbeta1-3Galbeta1-4Xylbeta1-O-Ser) of core proteins, which is formed by the stepwise addition of monosaccharide residues by the respective specific glycosyltransferases. The chain is 2-phosphoxylose phosphatase 1 from Danio rerio (Zebrafish).